We begin with the raw amino-acid sequence, 38 residues long: Photosystem II reaction center protein Y (38 aa).

Residues 4–22 form a helical membrane-spanning segment; the sequence is TIVVFAPIIAALAWVVFNI.

It belongs to the PsbY family. PSII is composed of 1 copy each of membrane proteins PsbA, PsbB, PsbC, PsbD, PsbE, PsbF, PsbH, PsbI, PsbJ, PsbK, PsbL, PsbM, PsbT, PsbX, PsbY, Psb30/Ycf12, peripheral proteins PsbO, CyanoQ (PsbQ), PsbU, PsbV and a large number of cofactors. It forms dimeric complexes.

It is found in the cellular thylakoid membrane. Functionally, loosely associated component of the core of photosystem II (PSII), it is not always seen in crystals. PSII is a light-driven water plastoquinone oxidoreductase, using light energy to abstract electrons from H(2)O, generating a proton gradient subsequently used for ATP formation. The protein is Photosystem II reaction center protein Y of Prochlorococcus marinus (strain MIT 9215).